A 205-amino-acid chain; its full sequence is Probable calcium-binding protein CML41 (205 aa).

A disordered region spans residues 26-55 (SFQNRRRSPKSNSSSTLNSPRSNSDDNNNI). Low complexity predominate over residues 35–54 (KSNSSSTLNSPRSNSDDNNN). EF-hand domains follow at residues 60–95 (ASKE…VGEY), 96–131 (ISHE…RDLY), 137–173 (DGDG…LGES), and 174–205 (RTYG…MMTV). Ca(2+)-binding residues include aspartate 73, aspartate 75, aspartate 77, lysine 79, glutamate 84, aspartate 109, aspartate 111, aspartate 113, serine 115, and aspartate 120. Residues aspartate 187, aspartate 189, asparagine 191, and glutamate 198 each contribute to the Ca(2+) site.

In terms of biological role, potential calcium sensor. The sequence is that of Probable calcium-binding protein CML41 (CML41) from Arabidopsis thaliana (Mouse-ear cress).